We begin with the raw amino-acid sequence, 274 residues long: 4-hydroxy-tetrahydrodipicolinate reductase (274 aa).

12-17 (GAAGRM) contributes to the NAD(+) binding site. R39 serves as a coordination point for NADP(+). NAD(+)-binding positions include 102-104 (GTT) and 126-129 (SGNM). H160 serves as the catalytic Proton donor/acceptor. H161 contributes to the (S)-2,3,4,5-tetrahydrodipicolinate binding site. The Proton donor role is filled by K164. 170–171 (GT) is a (S)-2,3,4,5-tetrahydrodipicolinate binding site.

It belongs to the DapB family.

It is found in the cytoplasm. It carries out the reaction (S)-2,3,4,5-tetrahydrodipicolinate + NAD(+) + H2O = (2S,4S)-4-hydroxy-2,3,4,5-tetrahydrodipicolinate + NADH + H(+). It catalyses the reaction (S)-2,3,4,5-tetrahydrodipicolinate + NADP(+) + H2O = (2S,4S)-4-hydroxy-2,3,4,5-tetrahydrodipicolinate + NADPH + H(+). Its pathway is amino-acid biosynthesis; L-lysine biosynthesis via DAP pathway; (S)-tetrahydrodipicolinate from L-aspartate: step 4/4. Catalyzes the conversion of 4-hydroxy-tetrahydrodipicolinate (HTPA) to tetrahydrodipicolinate. This is 4-hydroxy-tetrahydrodipicolinate reductase from Rhizobium rhizogenes (strain K84 / ATCC BAA-868) (Agrobacterium radiobacter).